A 411-amino-acid chain; its full sequence is Zinc metalloproteinase/disintegrin (411 aa).

The N-terminal stretch at 1-20 (MIEVLLVTICLAVFPYQGSS) is a signal peptide. The propeptide occupies 21–190 (IILESGNVND…KASQLYLTPE (170 aa)). One can recognise a Peptidase M12B domain in the interval 197 to 395 (RYVKLAIVVD…SKPQCILNAP (199 aa)). Asp284 contacts Ca(2+). 3 disulfides stabilise this stretch: Cys308/Cys390, Cys352/Cys374, and Cys354/Cys357. His333 lines the Zn(2+) pocket. Residue Glu334 is part of the active site. Zn(2+) is bound by residues His337 and His343. Residues Cys390 and Asn393 each contribute to the Ca(2+) site. Positions 396–411 (LRTDTVSTPVSGNEPL) are excised as a propeptide.

It belongs to the venom metalloproteinase (M12B) family. P-II subfamily. In terms of assembly, monomer. The cofactor is Zn(2+). As to expression, expressed by the venom gland.

Its subcellular location is the secreted. Its function is as follows. Snake venom metalloproteinase that impairs hemostasis in the envenomed animal. The polypeptide is Zinc metalloproteinase/disintegrin (Protobothrops mucrosquamatus (Taiwan habu)).